We begin with the raw amino-acid sequence, 501 residues long: Alpha-internexin (501 aa).

The tract at residues 1-87 (MSFGSEHYLC…SQAAARTNEY (87 aa)) is head. Ser72 carries the post-translational modification Phosphoserine. The segment at 88-129 (KIIRTNEKEQLQGLNDRFAVFIEKVHQLETQNRALEAELAAL) is coil 1A. One can recognise an IF rod domain in the interval 94–407 (EKEQLQGLND…KLLEGEETRF (314 aa)). A linker 1 region spans residues 130–142 (RQRHAEPSRVGEL). The segment at 143 to 238 (FQRELRELRA…QVHDEEVAEL (96 aa)) is coil 1B. At Ser219 the chain carries Phosphoserine. The interval 239–262 (LATLQASSQAAAEVDVAVAKPDLT) is linker 2. Positions 263–408 (SALREIRAQY…LLEGEETRFS (146 aa)) are coil 2. Lys290 bears the N6-acetyllysine mark. A phosphoserine mark is found at Ser335 and Ser498. The segment at 409–501 (TGGLSISGLN…EESTSSSQKM (93 aa)) is tail. Positions 441–501 (SAGLSLKKEE…EESTSSSQKM (61 aa)) are disordered. Over residues 488–501 (KSATEESTSSSQKM) the composition is skewed to polar residues.

This sequence belongs to the intermediate filament family. Forms homodimers (in vitro). Forms heterodimers with NEFL, NEFM or NEFH (in vitro). O-glycosylated.

Class-IV neuronal intermediate filament that is able to self-assemble. It is involved in the morphogenesis of neurons. It may form an independent structural network without the involvement of other neurofilaments or it may cooperate with NEFL to form the filamentous backbone to which NEFM and NEFH attach to form the cross-bridges. May also cooperate with the neuronal intermediate filament protein PRPH to form filamentous networks. The protein is Alpha-internexin (Ina) of Mus musculus (Mouse).